Consider the following 957-residue polypeptide: UvrABC system protein A (957 aa).

ATP is bound at residue 33-40; the sequence is GLSGSGKS. The C4-type zinc-finger motif lies at 252 to 279; sequence CPHCGFSIGELEPRLFSFNSPFGACPTC. ABC transporter domains follow at residues 309–587 and 607–935; these read WTPI…PNSL and PDGR…RYLK. ATP is bound at residue 639–646; the sequence is GVSGSGKS. A C4-type zinc finger spans residues 738-764; the sequence is CEACRGDGIIKIEMHFLPDVYVPCEVC.

Belongs to the ABC transporter superfamily. UvrA family. Forms a heterotetramer with UvrB during the search for lesions.

The protein resides in the cytoplasm. Its function is as follows. The UvrABC repair system catalyzes the recognition and processing of DNA lesions. UvrA is an ATPase and a DNA-binding protein. A damage recognition complex composed of 2 UvrA and 2 UvrB subunits scans DNA for abnormalities. When the presence of a lesion has been verified by UvrB, the UvrA molecules dissociate. The sequence is that of UvrABC system protein A from Bacillus subtilis (strain 168).